The sequence spans 155 residues: Xanthine-guanine phosphoribosyltransferase 2 (155 aa).

5-phospho-alpha-D-ribose 1-diphosphate-binding positions include R37–G38 and D91–T99. A Mg(2+)-binding site is contributed by D92. Residues D95 and I138 each contribute to the guanine site. Positions 95 and 138 each coordinate xanthine. Residues D95 to T99 and W137 to I138 each bind GMP.

The protein belongs to the purine/pyrimidine phosphoribosyltransferase family. XGPT subfamily. In terms of assembly, homotetramer. Requires Mg(2+) as cofactor.

It is found in the cell inner membrane. The catalysed reaction is GMP + diphosphate = guanine + 5-phospho-alpha-D-ribose 1-diphosphate. The enzyme catalyses XMP + diphosphate = xanthine + 5-phospho-alpha-D-ribose 1-diphosphate. It catalyses the reaction IMP + diphosphate = hypoxanthine + 5-phospho-alpha-D-ribose 1-diphosphate. It functions in the pathway purine metabolism; GMP biosynthesis via salvage pathway; GMP from guanine: step 1/1. It participates in purine metabolism; XMP biosynthesis via salvage pathway; XMP from xanthine: step 1/1. Functionally, purine salvage pathway enzyme that catalyzes the transfer of the ribosyl-5-phosphate group from 5-phospho-alpha-D-ribose 1-diphosphate (PRPP) to the N9 position of the 6-oxopurines guanine and xanthine to form the corresponding ribonucleotides GMP (guanosine 5'-monophosphate) and XMP (xanthosine 5'-monophosphate), with the release of PPi. To a lesser extent, also acts on hypoxanthine. The polypeptide is Xanthine-guanine phosphoribosyltransferase 2 (Haemophilus influenzae (strain 86-028NP)).